A 702-amino-acid chain; its full sequence is Methionine--tRNA ligase (702 aa).

A 'HIGH' region motif is present at residues proline 23 to histidine 33. Zn(2+) is bound by residues cysteine 154, cysteine 157, cysteine 167, and cysteine 170. Positions lysine 341–serine 345 match the 'KMSKS' region motif. Lysine 344 contributes to the ATP binding site. The interval leucine 562–proline 593 is disordered. The segment covering alanine 569–asparagine 578 has biased composition (polar residues). In terms of domain architecture, tRNA-binding spans aspartate 599–arginine 702.

Belongs to the class-I aminoacyl-tRNA synthetase family. MetG type 1 subfamily. Homodimer. Zn(2+) is required as a cofactor.

The protein resides in the cytoplasm. The catalysed reaction is tRNA(Met) + L-methionine + ATP = L-methionyl-tRNA(Met) + AMP + diphosphate. Functionally, is required not only for elongation of protein synthesis but also for the initiation of all mRNA translation through initiator tRNA(fMet) aminoacylation. The polypeptide is Methionine--tRNA ligase (Xylella fastidiosa (strain 9a5c)).